Reading from the N-terminus, the 239-residue chain is Prolactin-8A4 (239 aa).

The first 31 residues, 1 to 31 (MMKLALSQPPFSGTLLMLVVSILLLWEKAAS), serve as a signal peptide directing secretion. 2 disulfide bridges follow: Cys-35-Cys-42 and Cys-102-Cys-215. 2 N-linked (GlcNAc...) asparagine glycosylation sites follow: Asn-211 and Asn-218. Residues Cys-232 and Cys-239 are joined by a disulfide bond.

Belongs to the somatotropin/prolactin family. As to expression, placental basal zone cells.

It localises to the secreted. This Rattus norvegicus (Rat) protein is Prolactin-8A4 (Prl8a4).